The following is a 502-amino-acid chain: Lysine--tRNA ligase (502 aa).

The Mg(2+) site is built by glutamate 412 and glutamate 419.

It belongs to the class-II aminoacyl-tRNA synthetase family. In terms of assembly, homodimer. Mg(2+) is required as a cofactor.

It localises to the cytoplasm. The catalysed reaction is tRNA(Lys) + L-lysine + ATP = L-lysyl-tRNA(Lys) + AMP + diphosphate. The chain is Lysine--tRNA ligase from Nitrosomonas europaea (strain ATCC 19718 / CIP 103999 / KCTC 2705 / NBRC 14298).